A 177-amino-acid chain; its full sequence is ATP synthase subunit delta (177 aa).

Belongs to the ATPase delta chain family. In terms of assembly, F-type ATPases have 2 components, F(1) - the catalytic core - and F(0) - the membrane proton channel. F(1) has five subunits: alpha(3), beta(3), gamma(1), delta(1), epsilon(1). F(0) has three main subunits: a(1), b(2) and c(10-14). The alpha and beta chains form an alternating ring which encloses part of the gamma chain. F(1) is attached to F(0) by a central stalk formed by the gamma and epsilon chains, while a peripheral stalk is formed by the delta and b chains.

It localises to the cell membrane. Functionally, f(1)F(0) ATP synthase produces ATP from ADP in the presence of a proton or sodium gradient. F-type ATPases consist of two structural domains, F(1) containing the extramembraneous catalytic core and F(0) containing the membrane proton channel, linked together by a central stalk and a peripheral stalk. During catalysis, ATP synthesis in the catalytic domain of F(1) is coupled via a rotary mechanism of the central stalk subunits to proton translocation. This protein is part of the stalk that links CF(0) to CF(1). It either transmits conformational changes from CF(0) to CF(1) or is implicated in proton conduction. The sequence is that of ATP synthase subunit delta from Caldanaerobacter subterraneus subsp. tengcongensis (strain DSM 15242 / JCM 11007 / NBRC 100824 / MB4) (Thermoanaerobacter tengcongensis).